We begin with the raw amino-acid sequence, 672 residues long: Spermatid perinuclear RNA-binding protein (672 aa).

The region spanning 5 to 362 (RSFANDDRHV…ALKRPFEDGV (358 aa)) is the DZF domain. The interval 348–370 (GTGSSALKRPFEDGVGDDKDPNK) is disordered. Basic and acidic residues predominate over residues 356–370 (RPFEDGVGDDKDPNK). The DRBM 1 domain occupies 386–452 (DLMNALMRLN…AVKVLQAMGY (67 aa)). The disordered stretch occupies residues 463–494 (VSSDEKSDNEGKNETVSSISSNNTGNSTADTS). A compositionally biased stretch (basic and acidic residues) spans 465 to 475 (SDEKSDNEGKN). Positions 477–490 (TVSSISSNNTGNST) are enriched in low complexity. The region spanning 509 to 575 (SGKNPVMELN…ALAALEKLFS (67 aa)) is the DRBM 2 domain.

It localises to the cytoplasm. May be involved in normal spermatogenesis and sperm function. Binds to double-stranded DNA and RNA. This Gallus gallus (Chicken) protein is Spermatid perinuclear RNA-binding protein (STRBP).